The primary structure comprises 455 residues: Argininosuccinate lyase (455 aa).

It belongs to the lyase 1 family. Argininosuccinate lyase subfamily.

The protein resides in the cytoplasm. It catalyses the reaction 2-(N(omega)-L-arginino)succinate = fumarate + L-arginine. Its pathway is amino-acid biosynthesis; L-arginine biosynthesis; L-arginine from L-ornithine and carbamoyl phosphate: step 3/3. This is Argininosuccinate lyase from Caulobacter vibrioides (strain ATCC 19089 / CIP 103742 / CB 15) (Caulobacter crescentus).